Here is a 355-residue protein sequence, read N- to C-terminus: Putative arylamide transporter (355 aa).

6 consecutive transmembrane segments (helical) span residues 22–42 (TVLWPITQTSVVAGLAWYLTH), 44–64 (VFNHPQAFFAPISAVVCMSAT), 71–91 (RAQQMIVGVALGIVLGAGVHA), 92–112 (LLGSGPIAMGVVVFIALSVAV), 119–139 (VAQGLMFINQAAVSAVLVLVF), and 150–170 (LFDALVGGGLAIVFSILLFPP).

The protein localises to the cell membrane. May be involved in the import of arylamide compounds. This is Putative arylamide transporter from Mycobacterium bovis (strain ATCC BAA-935 / AF2122/97).